The following is a 239-amino-acid chain: Peptidase E (239 aa).

Active-site charge relay system residues include S122, D137, and H159.

This sequence belongs to the peptidase S51 family.

Its subcellular location is the cytoplasm. It catalyses the reaction Dipeptidase E catalyzes the hydrolysis of dipeptides Asp-|-Xaa. It does not act on peptides with N-terminal Glu, Asn or Gln, nor does it cleave isoaspartyl peptides.. In terms of biological role, hydrolyzes dipeptides containing N-terminal aspartate residues. May play a role in allowing the cell to use peptide aspartate to spare carbon otherwise required for the synthesis of the aspartate family of amino acids. This chain is Peptidase E, found in Shewanella baltica (strain OS195).